We begin with the raw amino-acid sequence, 157 residues long: 2-C-methyl-D-erythritol 2,4-cyclodiphosphate synthase (157 aa).

2 residues coordinate a divalent metal cation: D8 and H10. 4-CDP-2-C-methyl-D-erythritol 2-phosphate is bound by residues 8-10 (DVH) and 34-35 (HS). A divalent metal cation is bound at residue H42. Residues 56-58 (DIG), 61-65 (FPDTD), 100-106 (AQAPKMA), 132-135 (TTSE), F139, and R142 contribute to the 4-CDP-2-C-methyl-D-erythritol 2-phosphate site.

It belongs to the IspF family. Homotrimer. Requires a divalent metal cation as cofactor.

It carries out the reaction 4-CDP-2-C-methyl-D-erythritol 2-phosphate = 2-C-methyl-D-erythritol 2,4-cyclic diphosphate + CMP. Its pathway is isoprenoid biosynthesis; isopentenyl diphosphate biosynthesis via DXP pathway; isopentenyl diphosphate from 1-deoxy-D-xylulose 5-phosphate: step 4/6. Involved in the biosynthesis of isopentenyl diphosphate (IPP) and dimethylallyl diphosphate (DMAPP), two major building blocks of isoprenoid compounds. Catalyzes the conversion of 4-diphosphocytidyl-2-C-methyl-D-erythritol 2-phosphate (CDP-ME2P) to 2-C-methyl-D-erythritol 2,4-cyclodiphosphate (ME-CPP) with a corresponding release of cytidine 5-monophosphate (CMP). This is 2-C-methyl-D-erythritol 2,4-cyclodiphosphate synthase from Photobacterium profundum (strain SS9).